The following is a 235-amino-acid chain: Protein shisa-5 (235 aa).

Residues 1 to 26 (MAAPAPSLWTLLLLLLLLPPPPGAHG) form the signal peptide. Residues 27-105 (ELCRPFGEDN…SSFDSDPMSG (79 aa)) are Extracellular-facing. Residues 106 to 126 (FGATVAIGVTIFVVFIATIII) traverse the membrane as a helical segment. At 127–235 (CFTCSCCCLY…TYMDSLKTIP (109 aa)) the chain is on the cytoplasmic side. Residues 157-235 (APYPQPQPQP…TYMDSLKTIP (79 aa)) are disordered. 2 stretches are compositionally biased toward pro residues: residues 159-172 (YPQPQPQPVAPSYP) and 181-211 (PMPPQPGMPAAPYPTQYPPPYLAQPTGPPPY).

Belongs to the shisa family. Interacts with PDCD6; PDCD6 can stabilize SHISA5. In terms of tissue distribution, spleen and thymus.

Its subcellular location is the endoplasmic reticulum membrane. The protein resides in the nucleus membrane. Functionally, can induce apoptosis in a caspase-dependent manner and plays a role in p53/TP53-dependent apoptosis. This is Protein shisa-5 (Shisa5) from Mus musculus (Mouse).